The following is a 169-amino-acid chain: Group 2 truncated hemoglobin 3-2 (169 aa).

Heme b is bound at residue His99.

The protein belongs to the truncated hemoglobin family. Group II subfamily. As to quaternary structure, homodimer when ferric.

Functionally, hemoglobin-like protein that exhibits an unusual concentration-independent binding of O(2) and CO. Required for general plant development and during nodulation. May promote shoot organogenesis from root explants. This Medicago truncatula (Barrel medic) protein is Group 2 truncated hemoglobin 3-2.